The chain runs to 575 residues: Cyclic nucleotide-gated channel alpha-4 (575 aa).

Topologically, residues methionine 1–leucine 38 are cytoplasmic. A helical membrane pass occupies residues asparagine 39–aspartate 60. The Extracellular segment spans residues leucine 61–phenylalanine 70. A helical transmembrane segment spans residues valine 71–glycine 91. The Cytoplasmic portion of the chain corresponds to phenylalanine 92–leucine 116. The helical transmembrane segment at leucine 117–histidine 135 threads the bilayer. At isoleucine 136 to arginine 140 the chain is on the extracellular side. The chain crosses the membrane as a helical span at residues leucine 141–threonine 159. At arginine 160–alanine 166 the chain is on the cytoplasmic side. The interval proline 164–methionine 272 is ion conduction pathway. The helical transmembrane segment at phenylalanine 167 to leucine 190 threads the bilayer. Residues serine 191–arginine 213 are Extracellular-facing. Transmembrane regions (helical) follow at residues leucine 214–valine 248 and glycine 249–asparagine 273. Residues threonine 231–aspartate 234 are selectivity filter. The C-linker stretch occupies residues threonine 274–glutamine 350. Residues threonine 274–glutamate 575 are Cytoplasmic-facing. Residues leucine 292 to arginine 302 carry the IQ-type motif. Isoleucine 348–isoleucine 471 contributes to the a nucleoside 3',5'-cyclic phosphate binding site. The interval alanine 354–lysine 474 is cyclic nucleotide-binding domain. Glycine 414, serine 417, arginine 430, and threonine 431 together coordinate 3',5'-cyclic GMP. Residues arginine 430 and threonine 431 each contribute to the 3',5'-cyclic AMP site. A coiled-coil region spans residues threonine 493–glutamate 547. The tract at residues threonine 536–glutamate 575 is disordered. Over residues aspartate 544–proline 554 the composition is skewed to acidic residues. Positions threonine 558–glycine 567 are enriched in basic and acidic residues.

This sequence belongs to the cyclic nucleotide-gated cation channel (TC 1.A.1.5) family. CNGA4 subfamily. As to quaternary structure, the olfactory cyclic nucleotide-gated channel is an heterotetramer composed of CNGA2, CNGA4 and CNGB1b subunits with 2:1:1 stoichiometry. In terms of tissue distribution, expressed in the olfactory epithelium.

It localises to the cell projection. Its subcellular location is the cilium membrane. The catalysed reaction is Ca(2+)(in) = Ca(2+)(out). It carries out the reaction Na(+)(in) = Na(+)(out). It catalyses the reaction K(+)(in) = K(+)(out). The enzyme catalyses NH4(+)(in) = NH4(+)(out). The catalysed reaction is Rb(+)(in) = Rb(+)(out). It carries out the reaction Li(+)(in) = Li(+)(out). It catalyses the reaction Cs(+)(in) = Cs(+)(out). Its activity is regulated as follows. Ca(2+)-calmodulin exerts its inhibitory effect in cAMP sensitivity by binding to IQ-like motif of CNGA4 and preferably binds to the channel in the closed state. Inhibition by PIP3 of the CNG channel probably occurs via CGNA2 binding. In terms of biological role, pore-forming subunit of the olfactory cyclic nucleotide-gated channel. Operates in the cilia of olfactory sensory neurons where chemical stimulation of the odorant is converted to an electrical signal. Mediates odorant-induced cAMP-dependent Ca(2+) influx triggering neuron depolarization. The rise of intracellular Ca(2+) levels potentiates the olfactory response by activating Ca(2+)-dependent Cl(-) channels, but it also serves as a negative feedback signal to desensitize the channel for rapid adaptation to odorants. Conducts cGMP- and cAMP-gated ion currents, with permeability for monovalent and divalent cations. Conducts cAMP- and cGMP-gated ion currents, with permeability for monovalent and divalent cations. May conduct nitric oxide-gated Ca(2+) currents relevant to neurons of vomeronasal organ, a system involved in the perception of pheromones. This Mus musculus (Mouse) protein is Cyclic nucleotide-gated channel alpha-4.